Consider the following 213-residue polypeptide: MIDISRQLTPSHPNWPGDAPFRVKPGARIAQGDSVNTGELCTSTHTGTHVDAPWHYSETGARLEEVELNRYVGRCRVVTVRAEGGLIPAAALAGLPKRLPPRLLLHTGQPAHWTEFPEDFAALDPALIREAARRGVRLIGTDSPSVDPLTSKTLDAHHACLETDTLILEGLNLAEVPDGEYDLVCLPLPLAEVDGAPARAILLPAGTLPEGEG.

W15 lines the substrate pocket. 3 residues coordinate Zn(2+): H45, H49, and D51. H55 acts as the Proton donor/acceptor in catalysis. Residues H157 and E169 each coordinate Zn(2+).

This sequence belongs to the Cyclase 1 superfamily. KynB family. Homodimer. It depends on Zn(2+) as a cofactor.

The enzyme catalyses N-formyl-L-kynurenine + H2O = L-kynurenine + formate + H(+). It participates in amino-acid degradation; L-tryptophan degradation via kynurenine pathway; L-kynurenine from L-tryptophan: step 2/2. Its function is as follows. Catalyzes the hydrolysis of N-formyl-L-kynurenine to L-kynurenine, the second step in the kynurenine pathway of tryptophan degradation. The protein is Kynurenine formamidase of Deinococcus geothermalis (strain DSM 11300 / CIP 105573 / AG-3a).